Consider the following 265-residue polypeptide: Imidazole glycerol phosphate synthase subunit HisF (265 aa).

Active-site residues include Asp-11 and Asp-130.

The protein belongs to the HisA/HisF family. In terms of assembly, heterodimer of HisH and HisF.

Its subcellular location is the cytoplasm. It catalyses the reaction 5-[(5-phospho-1-deoxy-D-ribulos-1-ylimino)methylamino]-1-(5-phospho-beta-D-ribosyl)imidazole-4-carboxamide + L-glutamine = D-erythro-1-(imidazol-4-yl)glycerol 3-phosphate + 5-amino-1-(5-phospho-beta-D-ribosyl)imidazole-4-carboxamide + L-glutamate + H(+). It participates in amino-acid biosynthesis; L-histidine biosynthesis; L-histidine from 5-phospho-alpha-D-ribose 1-diphosphate: step 5/9. In terms of biological role, IGPS catalyzes the conversion of PRFAR and glutamine to IGP, AICAR and glutamate. The HisF subunit catalyzes the cyclization activity that produces IGP and AICAR from PRFAR using the ammonia provided by the HisH subunit. In Idiomarina loihiensis (strain ATCC BAA-735 / DSM 15497 / L2-TR), this protein is Imidazole glycerol phosphate synthase subunit HisF.